The chain runs to 384 residues: F-box/kelch-repeat protein At1g64840 (384 aa).

The F-box domain maps to 3–51; the sequence is PNWSQLPEELLNLISKNLDNCFDVVHARSICRSWRSAFPFPSSLSTLSY. 2 Kelch repeats span residues 87–137 and 259–309; these read PEYF…PLGF and NPFP…CCSA.

The chain is F-box/kelch-repeat protein At1g64840 from Arabidopsis thaliana (Mouse-ear cress).